We begin with the raw amino-acid sequence, 269 residues long: Phosphate import ATP-binding protein PstB 2 (269 aa).

One can recognise an ABC transporter domain in the interval 22–264; that stretch reads LSTNDLRVFY…PSLQSTEDYV (243 aa). Residue 55 to 62 coordinates ATP; the sequence is GPSGSGKS.

This sequence belongs to the ABC transporter superfamily. Phosphate importer (TC 3.A.1.7) family. The complex is composed of two ATP-binding proteins (PstB), two transmembrane proteins (PstC and PstA) and a solute-binding protein (PstS).

Its subcellular location is the cell membrane. The catalysed reaction is phosphate(out) + ATP + H2O = ADP + 2 phosphate(in) + H(+). Part of the ABC transporter complex PstSACB involved in phosphate import. Responsible for energy coupling to the transport system. The chain is Phosphate import ATP-binding protein PstB 2 from Lactococcus lactis subsp. lactis (strain IL1403) (Streptococcus lactis).